A 311-amino-acid polypeptide reads, in one-letter code: Pyrimidine-specific ribonucleoside hydrolase RihA (311 aa).

The active site involves His240.

Belongs to the IUNH family. RihA subfamily.

Its function is as follows. Hydrolyzes cytidine or uridine to ribose and cytosine or uracil, respectively. In Shigella flexneri serotype 5b (strain 8401), this protein is Pyrimidine-specific ribonucleoside hydrolase RihA.